Here is a 380-residue protein sequence, read N- to C-terminus: 2-aminoethylphosphonate--pyruvate transaminase (380 aa).

Residue lysine 204 is modified to N6-(pyridoxal phosphate)lysine.

Belongs to the class-V pyridoxal-phosphate-dependent aminotransferase family. PhnW subfamily. Homodimer. It depends on pyridoxal 5'-phosphate as a cofactor.

It catalyses the reaction (2-aminoethyl)phosphonate + pyruvate = phosphonoacetaldehyde + L-alanine. Involved in phosphonate degradation. In Aeromonas hydrophila subsp. hydrophila (strain ATCC 7966 / DSM 30187 / BCRC 13018 / CCUG 14551 / JCM 1027 / KCTC 2358 / NCIMB 9240 / NCTC 8049), this protein is 2-aminoethylphosphonate--pyruvate transaminase.